A 950-amino-acid polypeptide reads, in one-letter code: Defective chorion protein, FC106 isoform (950 aa).

The N-terminal stretch at 1–19 (MRLFSLLPLLALLVVQAAG) is a signal peptide. 3 disordered regions span residues 23–60 (VTSD…PSIN), 184–212 (APAP…PDAP), and 268–294 (PAQP…EDPY). Positions 32-41 (AGSTTNSTTD) are enriched in polar residues. Low complexity predominate over residues 268-280 (PAQPAAAGTDAQA). Tandem repeats lie at residues 493-518 (QNPM…QQIQ), 519-544 (QNPM…QQIQ), 545-570 (QNPM…QQIQ), 571-596 (QNPM…QQIQ), and 597-622 (QNPM…QQIQ). The 12 X 26 AA approximate tandem repeats, Glu, Met-rich stretch occupies residues 493–788 (QNPMMMQQRQ…IQQQQRQMMQ (296 aa)). One copy of the 6; approximate repeat lies at 623 to 652 (QNPMMMQQRQWSEEQAKIQHDQQMAQQMAQ). The stretch at 653-680 (QGLMMTEQRQRQWSEDQAKIQQAQQMAQ) is one 7; approximate repeat. The 8; approximate repeat unit spans residues 681-696 (QTPMMMPQMQQRQWTE). One copy of the 9; approximate repeat lies at 697-720 (DPQMVQQMQQRQWAEDQTRMQMAQ). The 10; approximate repeat unit spans residues 721-733 (QNPMMQQQRQMAE). The 11; approximate repeat unit spans residues 734 to 758 (NPQMMQQRQWSEEQTKIEQAQQMAQ). One copy of the 12; approximate repeat lies at 759-788 (QNQMMMQQMQQRQWSEDQAQIQQQQRQMMQ). Positions 843–875 (GPQMPENEGTARHKVDALGVGGNKRKKSKSKSA) are disordered.

Post-translationally, proteolytic cleavage of isoform FC106 generates 2 further products, S80 and S60.

It localises to the secreted. Functionally, required for proper assembly of the eggshell. This chain is Defective chorion protein, FC106 isoform, found in Drosophila melanogaster (Fruit fly).